Here is a 266-residue protein sequence, read N- to C-terminus: Glucagon-1 (266 aa).

Residues 1–20 (MKSTCYMIGILLMILQNTYQ) form the signal peptide. 6 consecutive propeptides follow at residues 21 to 50 (SPVP…LKEV), 84 to 95 (SGELSRRNADYE), 136 to 140 (NAEFE), 175 to 178 (IRYS), 213 to 224 (NFSEVHSVEEMD), and 261 to 266 (DLLEEQ). A compositionally biased stretch (polar residues) spans 23-32 (VPETDANSRS). The tract at residues 23–44 (VPETDANSRSVKAARNEAVDDS) is disordered.

It belongs to the glucagon family.

The protein resides in the secreted. Promotes hydrolysis of glycogen and lipids, and raises the blood sugar level. This chain is Glucagon-1 (gcg1), found in Xenopus laevis (African clawed frog).